Consider the following 459-residue polypeptide: tRNA modification GTPase MnmE (459 aa).

(6S)-5-formyl-5,6,7,8-tetrahydrofolate-binding residues include Arg29, Glu91, and Arg130. The region spanning 225 to 381 (GVKVAIVGRP…LEEALEQLVT (157 aa)) is the TrmE-type G domain. Position 235 (Asn235) interacts with K(+). Residues 235–240 (NVGKSS), 254–260 (TDLPGTT), and 279–282 (DTAG) each bind GTP. Ser239 is a Mg(2+) binding site. 3 residues coordinate K(+): Thr254, Leu256, and Thr259. Residue Thr260 participates in Mg(2+) binding. Lys459 provides a ligand contact to (6S)-5-formyl-5,6,7,8-tetrahydrofolate.

Belongs to the TRAFAC class TrmE-Era-EngA-EngB-Septin-like GTPase superfamily. TrmE GTPase family. Homodimer. Heterotetramer of two MnmE and two MnmG subunits. Requires K(+) as cofactor.

Its subcellular location is the cytoplasm. Exhibits a very high intrinsic GTPase hydrolysis rate. Involved in the addition of a carboxymethylaminomethyl (cmnm) group at the wobble position (U34) of certain tRNAs, forming tRNA-cmnm(5)s(2)U34. The protein is tRNA modification GTPase MnmE of Synechococcus sp. (strain JA-3-3Ab) (Cyanobacteria bacterium Yellowstone A-Prime).